The sequence spans 247 residues: Probable transcriptional regulatory protein ABO_0750 (247 aa).

It belongs to the TACO1 family.

It is found in the cytoplasm. In Alcanivorax borkumensis (strain ATCC 700651 / DSM 11573 / NCIMB 13689 / SK2), this protein is Probable transcriptional regulatory protein ABO_0750.